We begin with the raw amino-acid sequence, 818 residues long: Auxin response factor 12 (818 aa).

The segment covering 1–10 (MSSSSAASIG) has biased composition (low complexity). The tract at residues 1–24 (MSSSSAASIGPPQPPPPPAPPEEE) is disordered. The span at 11–20 (PPQPPPPPAP) shows a compositional bias: pro residues. The TF-B3 DNA-binding region spans 135-237 (FCKTLTASDT…QLLLGIRRAS (103 aa)). Disordered regions lie at residues 526–565 (NDQK…FSDP) and 629–648 (GSVL…NKIG). The span at 629-640 (GSVLHNSPTSKD) shows a compositional bias: polar residues. Residues 719–803 (RTFVKVYKSG…WYIKILSPED (85 aa)) form the PB1 domain.

The protein belongs to the ARF family. In terms of assembly, homodimers and heterodimers. In terms of tissue distribution, expressed in roots, culms, leaves and young panicles.

The protein localises to the nucleus. Its function is as follows. Auxin response factors (ARFs) are transcriptional factors that bind specifically to the DNA sequence 5'-TGTCTC-3' found in the auxin-responsive promoter elements (AuxREs). This is Auxin response factor 12 (ARF12) from Oryza sativa subsp. japonica (Rice).